Consider the following 473-residue polypeptide: Photosystem II CP43 reaction center protein (473 aa).

Positions 1-14 (MKTLYSLRRFYHVE) are excised as a propeptide. At T15 the chain carries N-acetylthreonine. T15 bears the Phosphothreonine mark. The next 5 helical transmembrane spans lie at 69 to 93 (LFEVAHFVPEKPMYEQGLILLPHLA), 134 to 155 (LLGPETLEESFPFFGYVWKDRN), 178 to 200 (KALFFGGIYDTWAPGGGDVRKIT), 255 to 275 (KPFAWARRALVWSGEAYLSYS), and 291 to 312 (WFNNTAYPSEFYGPTGPEASQA). Residue E367 participates in [CaMn4O5] cluster binding. A helical transmembrane segment spans residues 447–471 (RARAAAAGFEKGIDRDFEPVLSMTP).

It belongs to the PsbB/PsbC family. PsbC subfamily. In terms of assembly, PSII is composed of 1 copy each of membrane proteins PsbA, PsbB, PsbC, PsbD, PsbE, PsbF, PsbH, PsbI, PsbJ, PsbK, PsbL, PsbM, PsbT, PsbX, PsbY, PsbZ, Psb30/Ycf12, at least 3 peripheral proteins of the oxygen-evolving complex and a large number of cofactors. It forms dimeric complexes. Requires Binds multiple chlorophylls and provides some of the ligands for the Ca-4Mn-5O cluster of the oxygen-evolving complex. It may also provide a ligand for a Cl- that is required for oxygen evolution. PSII binds additional chlorophylls, carotenoids and specific lipids. as cofactor.

The protein resides in the plastid. The protein localises to the chloroplast thylakoid membrane. In terms of biological role, one of the components of the core complex of photosystem II (PSII). It binds chlorophyll and helps catalyze the primary light-induced photochemical processes of PSII. PSII is a light-driven water:plastoquinone oxidoreductase, using light energy to abstract electrons from H(2)O, generating O(2) and a proton gradient subsequently used for ATP formation. The polypeptide is Photosystem II CP43 reaction center protein (Fagopyrum esculentum subsp. ancestrale (Wild buckwheat)).